The sequence spans 231 residues: MAKLTKRQKAIAAAVEANKVYTLEEAVQVLNSLPAAKFKESLDISVNLGVDPRKSDQVVRGATTLPAGTGKTVRVAVFAQGAQAEAAKEAGADVVGFDDLAESIQGGNLDFDVVIAAPDAMRVVGKLGTILGPRGLMPNPKVGTVTPDVAGAVKNAKSGQARYRVDKAGIIHAAIGQVGFDAAAIRQNVETLVADLKKLKPATSKGVYIKKITLSSTMGPGLTVDVNNVSN.

Belongs to the universal ribosomal protein uL1 family. Part of the 50S ribosomal subunit.

In terms of biological role, binds directly to 23S rRNA. The L1 stalk is quite mobile in the ribosome, and is involved in E site tRNA release. Its function is as follows. Protein L1 is also a translational repressor protein, it controls the translation of the L11 operon by binding to its mRNA. This chain is Large ribosomal subunit protein uL1, found in Acinetobacter baumannii (strain AB307-0294).